A 294-amino-acid polypeptide reads, in one-letter code: MQKYDKMEKIGEGTYGTVFKGRNRDTMEIVALKRVRLDEDDEGVPSSALREICLLKELKHKNIVRLIDVLHSDKKLTLVFEHCDQDLKKYFDSLNGEIDMAVCRSFMLQLLRGLAFCHSHNVLHRDLKPQNLLINKNGELKLADFGLARAFGIPVKCYSAEVVTLWYRPPDVLFGAKLYTTSIDMWSAGCILAELADAGRPLFPGSDVLDQLMKIFRVLGTPNEDSWPGVSHLSDYVALPSFPAITSWSQLVPRLNSKGRDLLQKLLICRPNQRISAEAAMQHPYFTDSSSSGH.

The Protein kinase domain maps to tyrosine 4 to phenylalanine 286. ATP contacts are provided by residues isoleucine 10–valine 18 and lysine 33. The residue at position 14 (threonine 14) is a Phosphothreonine. Tyrosine 15 carries the post-translational modification Phosphotyrosine. Aspartate 126 acts as the Proton acceptor in catalysis. Residue serine 159 is modified to Phosphoserine.

The protein belongs to the protein kinase superfamily. CMGC Ser/Thr protein kinase family. CDC2/CDKX subfamily. As to expression, abundantly expressed in all adult tissues. Lower levels found in larvae and early embryos. Barely detectable in late embryos.

The catalysed reaction is L-seryl-[protein] + ATP = O-phospho-L-seryl-[protein] + ADP + H(+). The enzyme catalyses L-threonyl-[protein] + ATP = O-phospho-L-threonyl-[protein] + ADP + H(+). Probably involved in the control of the cell cycle. Interacts with D1 and D3-type G1 cyclins. Possible regulator of neuronal differentiation and/or development. The sequence is that of Cyclin-dependent kinase 5 homolog (Cdk5) from Drosophila melanogaster (Fruit fly).